A 392-amino-acid chain; its full sequence is Phosphoglycerate kinase (392 aa).

Residues 21–23 (DFN), Arg36, 59–62 (HLGR), Arg118, and Arg151 contribute to the substrate site. ATP is bound by residues Lys201, Gly292, Glu323, and 349–352 (GGDS).

Belongs to the phosphoglycerate kinase family. In terms of assembly, monomer.

It is found in the cytoplasm. The enzyme catalyses (2R)-3-phosphoglycerate + ATP = (2R)-3-phospho-glyceroyl phosphate + ADP. It participates in carbohydrate degradation; glycolysis; pyruvate from D-glyceraldehyde 3-phosphate: step 2/5. This Borrelia turicatae (strain 91E135) protein is Phosphoglycerate kinase.